Reading from the N-terminus, the 65-residue chain is Large ribosomal subunit protein uL30 (65 aa).

The protein belongs to the universal ribosomal protein uL30 family. In terms of assembly, part of the 50S ribosomal subunit.

The sequence is that of Large ribosomal subunit protein uL30 from Brucella suis (strain ATCC 23445 / NCTC 10510).